Here is a 426-residue protein sequence, read N- to C-terminus: Tyrosine--tRNA ligase (426 aa).

Tyr36 contributes to the L-tyrosine binding site. A 'HIGH' region motif is present at residues 41–50 (PTAPSLHVGH). Residues Tyr174 and Gln178 each coordinate L-tyrosine. The 'KMSKS' region motif lies at 234–238 (KLGKS). An ATP-binding site is contributed by Lys237. Residues 359 to 416 (DGIVDLLVASGLSPSRGAARRTIDEGGVLVNNIRIQSEEWTPRTSDFLHGRWLVLRRG) enclose the S4 RNA-binding domain.

It belongs to the class-I aminoacyl-tRNA synthetase family. TyrS type 1 subfamily. Homodimer.

It localises to the cytoplasm. The enzyme catalyses tRNA(Tyr) + L-tyrosine + ATP = L-tyrosyl-tRNA(Tyr) + AMP + diphosphate + H(+). Catalyzes the attachment of tyrosine to tRNA(Tyr) in a two-step reaction: tyrosine is first activated by ATP to form Tyr-AMP and then transferred to the acceptor end of tRNA(Tyr). The chain is Tyrosine--tRNA ligase from Mycobacterium leprae (strain TN).